The following is a 105-amino-acid chain: Large ribosomal subunit protein eL30 (105 aa).

Belongs to the eukaryotic ribosomal protein eL30 family.

The sequence is that of Large ribosomal subunit protein eL30 (RPL30) from Candida glabrata (strain ATCC 2001 / BCRC 20586 / JCM 3761 / NBRC 0622 / NRRL Y-65 / CBS 138) (Yeast).